A 158-amino-acid chain; its full sequence is MSQSSRLCSGYYSLNRSFVEPFQCPQRGDGAALLYCCGFADLKYCCSEPGSYFPYKHSYMWSLSIGALVGLGIAALVLLAFVISVCVLCYLFLYTKPQRLDNGLKLQHLETSSTLEGNINRKAKGLNAVSNSTNETFYEADDGTQEKTMDITQINIAC.

The helical transmembrane segment at 65–85 (IGALVGLGIAALVLLAFVISV) threads the bilayer.

The protein belongs to the shisa family.

The protein localises to the membrane. This is Protein shisa-like-2B (Shisal2b) from Mus musculus (Mouse).